The primary structure comprises 738 residues: Protein ALEX (738 aa).

6 disordered regions span residues 1-105, 155-188, 237-350, 387-516, 528-578, and 611-689; these read MSPS…EEAM, REDYSPPPEESVPFQLDGEEFGGDSPPPDSASHA, TTFP…LPKP, MSGQ…LGQP, GEPG…LDPP, and GMRL…RPRI. The span at 257-273 shows a compositional bias: polar residues; it reads GSTTTPLSIWTAPQSQV. Residues 279-301 show a composition bias toward basic and acidic residues; the sequence is KSREPQLRASTQRDPHLSDKQPR. Residues 387–396 show a composition bias toward polar residues; it reads MSGQNQTEGQ. Composition is skewed to pro residues over residues 410 to 438, 448 to 467, and 476 to 485; these read QPPPPPPSQPPSQPLSQPPSQPPSQPPSQ, PSLPPGQSPTPKRSPQPRQP, and PGQPPSPLRS. Composition is skewed to low complexity over residues 542–564, 615–626, and 656–671; these read PSLPAQQLPPEQPLLPAQSLPAG, RPASARSSPPAM, and ATRSATSSPEPSEAAS.

The protein belongs to the ALEX family. Interacts with the N-terminal region of the XLas isoforms of guanine nucleotide-binding protein G(s) subunit alpha.

The protein localises to the cell membrane. The protein resides in the cell projection. It localises to the ruffle. May inhibit the adenylyl cyclase-stimulating activity of guanine nucleotide-binding protein G(s) subunit alpha which is produced from the same locus in a different open reading frame. This Rattus norvegicus (Rat) protein is Protein ALEX.